Consider the following 346-residue polypeptide: MTDVEIKAENGSGDASLEPENLRKIFVGGLTSNTTDDLMREFYSQFGEITDIIVMRDPTTKRSRGFGFVTFSGKTEVDAAMKQRPHIIDGKTVDPKRAVPRDDKNRSESNVSTKRLYVSGVREDHTEDMLTEYFTKYGTVTKSEIILDKATQKPRGFGFVTFDDHDSVDQCVLQKSHMVNGHRCDVRKGLSKDEMSKAQMNRDRETRGGRSRDGQRGGYNGGGGGGGGWGGPAQRGGPGAYGGPGGGGQGGYGGDYGGGWGQQGGGGQGGWGGPQQQQGGGGWGQQGGGGQGGWGGPQQQQQGGWGGPQQGGGGGGWGGQGQQQGGWGGQSGAQQWAHAQGGNRNY.

RRM domains lie at 23 to 123 and 114 to 191; these read RKIF…GVRE and KRLY…KGLS. 2 stretches are compositionally biased toward basic and acidic residues: residues 92 to 107 and 189 to 215; these read TVDP…KNRS and GLSK…RDGQ. Disordered stretches follow at residues 92–111 and 189–346; these read TVDP…ESNV and GLSK…NRNY. 2 stretches are compositionally biased toward gly residues: residues 216-296 and 303-331; these read RGGY…GWGG and GGWG…GGQS. The span at 332-346 shows a compositional bias: low complexity; that stretch reads GAQQWAHAQGGNRNY.

It is found in the nucleus. The protein localises to the chromosome. The protein resides in the telomere. Its function is as follows. This protein is a component of ribonucleosomes. Overexpression gradually increases telomere length, leading to increase lifespan. The sequence is that of Heterogeneous nuclear ribonucleoprotein A1 from Caenorhabditis elegans.